The chain runs to 372 residues: Ligninase H2 (372 aa).

The N-terminal stretch at 1–21 (MAFKQLLAALSVALTLQVTQA) is a signal peptide. Residues 22-28 (APNLDKR) constitute a propeptide that is removed on maturation. 4 disulfides stabilise this stretch: C31/C44, C43/C314, C63/C149, and C278/C344. H76 acts as the Proton acceptor in catalysis. Ca(2+) is bound by residues D77, G95, D97, and S99. Residue H205 coordinates heme b. S206, D223, T225, Q228, and D230 together coordinate Ca(2+). A glycan (N-linked (GlcNAc...) asparagine) is linked at N286.

This sequence belongs to the peroxidase family. Ligninase subfamily. It depends on heme b as a cofactor. Ca(2+) is required as a cofactor.

The catalysed reaction is 1-(3,4-dimethoxyphenyl)-2-(2-methoxyphenoxy)propane-1,3-diol + H2O2 = 3,4-dimethoxybenzaldehyde + guaiacol + glycolaldehyde + H2O. The enzyme catalyses 2 (3,4-dimethoxyphenyl)methanol + H2O2 = 2 (3,4-dimethoxyphenyl)methanol radical + 2 H2O. The protein operates within secondary metabolite metabolism; lignin degradation. In terms of biological role, depolymerization of lignin. Catalyzes the C(alpha)-C(beta) cleavage of the propyl side chains of lignin. The sequence is that of Ligninase H2 (GLG4) from Phanerodontia chrysosporium (White-rot fungus).